A 219-amino-acid chain; its full sequence is RPA-interacting protein (219 aa).

Serine 18 is subject to Phosphoserine. A Glycyl lysine isopeptide (Lys-Gly) (interchain with G-Cter in SUMO); in isoform 2 cross-link involves residue lysine 121. The RIP-type zinc finger occupies 137 to 212 (CPVCTKYNLR…SSLLMSCLAC (76 aa)). Residues 164–180 (SSELTEQKLRACLEGSI) are mediates nuclear export.

In terms of assembly, interacts with the RPA1 subunit of RPA complex. Sumoylated. Sumoylation is required for localization in the nuclear PML body and transport of RPA complex in PML body. Upon UV irradiation and during S phase, it is desumoylated, releasing RPA complex that is translocated to sites of DNA damage. Sumoylation takes place at different Lys residues. Variant 'Lys-103' adds a sumoylation site and increases total sumoylation levels. Widely expressed. Expressed in pancreas, kidney, muscle, liver, lung, placenta, brain, heart, leukocytes, colon, intestine, ovary, testis, prostate, thymus and spleen.

Its subcellular location is the cytoplasm. The protein resides in the nucleus. It is found in the PML body. In terms of biological role, mediates the import of RPA complex into the nucleus, possibly via some interaction with importin beta. Isoform 2 is sumoylated and mediates the localization of RPA complex into the PML body of the nucleus, thereby participating in RPA function in DNA metabolism. The protein is RPA-interacting protein (RPAIN) of Homo sapiens (Human).